The following is a 375-amino-acid chain: Growth/differentiation factor 8 (375 aa).

The signal sequence occupies residues 1–18 (MQKLQIFVYIYLFVLIVA). Residues 19–266 (GPVDLNENSE…VTDTPKRSRR (248 aa)) constitute a propeptide that is removed on maturation. Residues Asn48 and Asn71 are each glycosylated (N-linked (GlcNAc...) asparagine). 4 disulfide bridges follow: Cys272/Cys282, Cys281/Cys340, Cys309/Cys372, and Cys313/Cys374.

This sequence belongs to the TGF-beta family. In terms of assembly, homodimer; disulfide-linked. Interacts with WFIKKN2, leading to inhibit its activity. Interacts with FSTL3. In terms of processing, synthesized as large precursor molecule that undergoes proteolytic cleavage to generate an N-terminal propeptide and a disulfide linked C-terminal dimer, which is the biologically active molecule. The circulating form consists of a latent complex of the C-terminal dimer and other proteins, including its propeptide, which maintain the C-terminal dimer in a latent, inactive state. Ligand activation requires additional cleavage of the prodomain by a tolloid-like metalloproteinase.

The protein resides in the secreted. In terms of biological role, acts specifically as a negative regulator of skeletal muscle growth. This Aepyceros melampus (Impala) protein is Growth/differentiation factor 8 (MSTN).